The chain runs to 117 residues: Prefoldin subunit beta (117 aa).

Belongs to the prefoldin subunit beta family. In terms of assembly, heterohexamer of two alpha and four beta subunits.

The protein resides in the cytoplasm. In terms of biological role, molecular chaperone capable of stabilizing a range of proteins. Seems to fulfill an ATP-independent, HSP70-like function in archaeal de novo protein folding. This Methanosarcina mazei (strain ATCC BAA-159 / DSM 3647 / Goe1 / Go1 / JCM 11833 / OCM 88) (Methanosarcina frisia) protein is Prefoldin subunit beta.